A 143-amino-acid polypeptide reads, in one-letter code: Peptide methionine sulfoxide reductase MsrB (143 aa).

In terms of domain architecture, MsrB spans D16 to R139. Zn(2+) is bound by residues C55, C58, C104, and C107. C128 (nucleophile) is an active-site residue.

This sequence belongs to the MsrB Met sulfoxide reductase family. Zn(2+) is required as a cofactor.

It catalyses the reaction L-methionyl-[protein] + [thioredoxin]-disulfide + H2O = L-methionyl-(R)-S-oxide-[protein] + [thioredoxin]-dithiol. This chain is Peptide methionine sulfoxide reductase MsrB, found in Burkholderia multivorans (strain ATCC 17616 / 249).